Reading from the N-terminus, the 204-residue chain is Lymphotoxin-alpha (204 aa).

A signal peptide spans 1–33 (MTPPGRLYLRRVCSTPILLLLGLLLALPPEAQG). One can recognise a THD domain in the interval 62–204 (PAAHLVGDPS…SSVFFGAFAL (143 aa)). Asparagine 95 carries an N-linked (GlcNAc...) asparagine glycan. A disulfide bridge links cysteine 119 with cysteine 155.

This sequence belongs to the tumor necrosis factor family. In terms of assembly, homotrimer, and heterotrimer of either two LTB and one LTA subunits or (less prevalent) two LTA and one LTB subunits. Interacts with TNFRSF14.

It is found in the secreted. The protein localises to the membrane. Functionally, cytokine that in its homotrimeric form binds to TNFRSF1A/TNFR1, TNFRSF1B/TNFBR and TNFRSF14/HVEM. In its heterotrimeric form with LTB binds to TNFRSF3/LTBR. Lymphotoxin is produced by lymphocytes and is cytotoxic for a wide range of tumor cells in vitro and in vivo. This chain is Lymphotoxin-alpha (LTA), found in Sus scrofa (Pig).